Here is a 139-residue protein sequence, read N- to C-terminus: Small ribosomal subunit protein uS12 (139 aa).

The tract at residues 1–21 (MSTVSQLIKKRRSSKTSKTKA) is disordered. Positions 8-18 (IKKRRSSKTSK) are enriched in basic residues.

Belongs to the universal ribosomal protein uS12 family. As to quaternary structure, part of the 30S ribosomal subunit. Contacts proteins S8 and S17. May interact with IF1 in the 30S initiation complex.

Its function is as follows. With S4 and S5 plays an important role in translational accuracy. In terms of biological role, interacts with and stabilizes bases of the 16S rRNA that are involved in tRNA selection in the A site and with the mRNA backbone. Located at the interface of the 30S and 50S subunits, it traverses the body of the 30S subunit contacting proteins on the other side and probably holding the rRNA structure together. The combined cluster of proteins S8, S12 and S17 appears to hold together the shoulder and platform of the 30S subunit. The polypeptide is Small ribosomal subunit protein uS12 (Onion yellows phytoplasma (strain OY-M)).